A 284-amino-acid polypeptide reads, in one-letter code: Acetylglutamate kinase (284 aa).

Substrate contacts are provided by residues 64–65, arginine 86, and asparagine 177; that span reads GG.

Belongs to the acetylglutamate kinase family. ArgB subfamily.

It localises to the cytoplasm. It catalyses the reaction N-acetyl-L-glutamate + ATP = N-acetyl-L-glutamyl 5-phosphate + ADP. It functions in the pathway amino-acid biosynthesis; L-arginine biosynthesis; N(2)-acetyl-L-ornithine from L-glutamate: step 2/4. Catalyzes the ATP-dependent phosphorylation of N-acetyl-L-glutamate. The polypeptide is Acetylglutamate kinase (Haemophilus ducreyi (strain 35000HP / ATCC 700724)).